The primary structure comprises 421 residues: Serine--tRNA ligase (421 aa).

An L-serine-binding site is contributed by 225 to 227; the sequence is TAE. ATP-binding positions include 256–258 and Val-272; that span reads RSE. Glu-279 contacts L-serine. Residue 345 to 348 participates in ATP binding; the sequence is ETHS. Thr-380 contributes to the L-serine binding site.

This sequence belongs to the class-II aminoacyl-tRNA synthetase family. Type-1 seryl-tRNA synthetase subfamily. Homodimer. The tRNA molecule binds across the dimer.

The protein localises to the cytoplasm. It carries out the reaction tRNA(Ser) + L-serine + ATP = L-seryl-tRNA(Ser) + AMP + diphosphate + H(+). The enzyme catalyses tRNA(Sec) + L-serine + ATP = L-seryl-tRNA(Sec) + AMP + diphosphate + H(+). It functions in the pathway aminoacyl-tRNA biosynthesis; selenocysteinyl-tRNA(Sec) biosynthesis; L-seryl-tRNA(Sec) from L-serine and tRNA(Sec): step 1/1. Its function is as follows. Catalyzes the attachment of serine to tRNA(Ser). Is also able to aminoacylate tRNA(Sec) with serine, to form the misacylated tRNA L-seryl-tRNA(Sec), which will be further converted into selenocysteinyl-tRNA(Sec). The sequence is that of Serine--tRNA ligase from Thermus thermophilus (strain ATCC 27634 / DSM 579 / HB8).